A 544-amino-acid polypeptide reads, in one-letter code: Ribosomal oxygenase 1 (544 aa).

The tract at residues 1-78 is disordered; it reads MERKHMSALS…HEGERDCREM (78 aa). Polar residues predominate over residues 10–19; sequence SIYQSLSGGK. Over residues 42–53 the composition is skewed to basic residues; the sequence is PSKKATKKKGTK. Residues 63-78 show a composition bias toward basic and acidic residues; that stretch reads SSEKEKHEGERDCREM. The 146-residue stretch at 197–342 folds into the JmjC domain; sequence CSIRMLNPQA…DLMLKLMPAA (146 aa). Fe cation contacts are provided by His243, Asp245, and His308.

It belongs to the ROX family. NO66 subfamily. The cofactor is Fe(2+).

It is found in the nucleus. The protein resides in the nucleolus. It localises to the nucleoplasm. The catalysed reaction is N(6),N(6)-dimethyl-L-lysyl(36)-[histone H3] + 2 2-oxoglutarate + 2 O2 = L-lysyl(36)-[histone H3] + 2 formaldehyde + 2 succinate + 2 CO2. It carries out the reaction N(6)-methyl-L-lysyl-[protein] + 2-oxoglutarate + O2 = L-lysyl-[protein] + formaldehyde + succinate + CO2. The enzyme catalyses L-histidyl-[protein] + 2-oxoglutarate + O2 = (3S)-3-hydroxy-L-histidyl-[protein] + succinate + CO2. In terms of biological role, oxygenase that can act as both a histone lysine demethylase and a ribosomal histidine hydroxylase. Specifically demethylates 'Lys-4' (H3K4me) and 'Lys-36' (H3K36me) of histone H3, thereby playing a central role in histone code. Preferentially demethylates trimethylated H3 'Lys-4' (H3K4me3) and monomethylated H3 'Lys-4' (H3K4me1) residues, while it has weaker activity for dimethylated H3 'Lys-36' (H3K36me2). Also catalyzes demethylation of non-histone proteins. Also catalyzes the hydroxylation of 60S ribosomal protein L8 on 'His-216', thereby playing a role in ribosome biogenesis. The polypeptide is Ribosomal oxygenase 1 (riox1) (Danio rerio (Zebrafish)).